Here is a 1407-residue protein sequence, read N- to C-terminus: DNA-directed RNA polymerase subunit beta' (1407 aa).

Residues Cys70, Cys72, Cys85, and Cys88 each contribute to the Zn(2+) site. Mg(2+) contacts are provided by Asp460, Asp462, and Asp464. The Zn(2+) site is built by Cys814, Cys888, Cys895, and Cys898.

This sequence belongs to the RNA polymerase beta' chain family. As to quaternary structure, the RNAP catalytic core consists of 2 alpha, 1 beta, 1 beta' and 1 omega subunit. When a sigma factor is associated with the core the holoenzyme is formed, which can initiate transcription. Mg(2+) serves as cofactor. It depends on Zn(2+) as a cofactor.

The catalysed reaction is RNA(n) + a ribonucleoside 5'-triphosphate = RNA(n+1) + diphosphate. Its function is as follows. DNA-dependent RNA polymerase catalyzes the transcription of DNA into RNA using the four ribonucleoside triphosphates as substrates. In Cellvibrio japonicus (strain Ueda107) (Pseudomonas fluorescens subsp. cellulosa), this protein is DNA-directed RNA polymerase subunit beta'.